A 276-amino-acid chain; its full sequence is N-acyl homoserine lactonase AiiB (276 aa).

Residues H111, H113, H116, H191, D213, and H259 each contribute to the Zn(2+) site.

The protein belongs to the metallo-beta-lactamase superfamily. Zn(2+) serves as cofactor.

It catalyses the reaction an N-acyl-L-homoserine lactone + H2O = an N-acyl-L-homoserine + H(+). This Rhizobium rhizogenes (strain K84 / ATCC BAA-868) (Agrobacterium radiobacter) protein is N-acyl homoserine lactonase AiiB.